Reading from the N-terminus, the 137-residue chain is TM2 domain-containing protein DDB_G0287015 (137 aa).

A TM2 domain is found at 9 to 57 (QASLVVAYLLLIFLGFFGVHRFYVGRTISGVVYLLTGGIFGIGYIVDFF). 2 helical membrane passes run 12–32 (LVVAYLLLIFLGFFGVHRFYV) and 39–59 (VVYLLTGGIFGIGYIVDFFLL). Residues 106–137 (IQPQQQQYYQQPYQQQQYQPQPYQPNSPQYQP) form a disordered region.

It belongs to the TM2 family.

Its subcellular location is the membrane. This chain is TM2 domain-containing protein DDB_G0287015, found in Dictyostelium discoideum (Social amoeba).